The chain runs to 1134 residues: Envelopment polyprotein (1134 aa).

Positions 1-16 (MWSLLLLAALVGQGFA) are cleaved as a signal peptide. The Lumenal portion of the chain corresponds to 17–484 (LKNVFDMRIQ…PGFHGWATAA (468 aa)). Disulfide bonds link cysteine 27–cysteine 149, cysteine 61–cysteine 155, cysteine 107–cysteine 126, cysteine 131–cysteine 136, cysteine 173–cysteine 183, cysteine 208–cysteine 245, cysteine 232–cysteine 349, cysteine 374–cysteine 433, cysteine 378–cysteine 387, and cysteine 403–cysteine 422. Asparagine 132 carries an N-linked (GlcNAc...) asparagine; by host glycan. Residues asparagine 233 and asparagine 345 are each glycosylated (N-linked (GlcNAc...) asparagine; by host). Asparagine 397 carries an N-linked (GlcNAc...) asparagine; by host glycan. Residues 485–504 (LLITFCFGWVLIPACTLAIL) traverse the membrane as a helical segment. At 505–626 (LVLKFFANIL…NLFRYKSRCY (122 aa)) the chain is on the cytoplasmic side. Positions 514–531 (LHTSNQENRFKAILRKIK) are binding to the ribonucleoprotein. CCHC-type zinc fingers lie at residues 543–563 (CEIC…NLSC) and 568–589 (CPYC…YKVC). 3 binding to the ribonucleoprotein regions span residues 586–603 (YKVC…KKTV), 590–601 (QATHRFREDLKK), and 609–623 (WARL…RYKS). The ITAM domain maps to 609-632 (WARLYRTLNLFRYKSRCYILTMWT). The short motif at 613 to 616 (YRTL) is the YxxL element. Residues 627 to 647 (ILTMWTLLLIIESILWAASAA) form a helical membrane-spanning segment. Residues 648–1105 (EIPLVPLWTD…WVMGIINGNW (458 aa)) are Lumenal-facing. 8 cysteine pairs are disulfide-bonded: cysteine 734–cysteine 769, cysteine 738–cysteine 776, cysteine 750–cysteine 884, cysteine 764–cysteine 895, cysteine 779–cysteine 903, cysteine 805–cysteine 814, cysteine 822–cysteine 831, and cysteine 862–cysteine 866. The segment at 756 to 776 (YEYENSWACNPPDCPGVGTGC) is fusion loop. N-linked (GlcNAc...) asparagine; by host glycosylation occurs at asparagine 927. 5 cysteine pairs are disulfide-bonded: cysteine 969–cysteine 999, cysteine 992–cysteine 1044, cysteine 1009–cysteine 1014, cysteine 1045–cysteine 1050, and cysteine 1084–cysteine 1088. Residues 1106-1125 (VVLIVLCVLLLFSLILLSIL) traverse the membrane as a helical segment. The segment at 1121–1134 (LLSILCPVRKHKKS) is binding to the ribonucleoprotein. The Cytoplasmic portion of the chain corresponds to 1126–1134 (CPVRKHKKS).

The protein belongs to the hantavirus envelope glycoprotein family. Homodimer. Homotetramer; forms heterotetrameric Gn-Gc spikes in the pre-fusion conformation. Interacts (via C-terminus) with the nucleoprotein. Interacts with host TUFM; this interaction contributes to the virus-induced degradation of mitochondria by autophagy, which leads to degradation of host MAVS and inhibition of type I interferon (IFN) responses. Interacts with host MAP1LC3B; this interaction contributes to the virus-induced degradation of mitochondria by autophagy, which leads to degradation of host MAVS and inhibition of type I interferon (IFN) responses. As to quaternary structure, homodimer. Homotetramer; forms heterotetrameric Gn-Gc spikes in the pre-fusion conformation. Homotrimer; forms homotrimer in the post-fusion conformation at acidic pH. Interacts (via C-terminus) with the nucleoprotein. In terms of processing, envelope polyprotein precursor is quickly cleaved in vivo just after synthesis, presumably by host signal peptidase.

The protein resides in the virion membrane. It localises to the host cell surface. It is found in the host Golgi apparatus membrane. The protein localises to the host endoplasmic reticulum membrane. Its subcellular location is the host mitochondrion. Forms homotetramers with glycoprotein C at the surface of the virion. Attaches the virion to host cell receptors including integrin ITGAV/ITGB3. This attachment induces virion internalization predominantly through clathrin-dependent endocytosis. Mediates the assembly and budding of infectious virus particles through its interaction with the nucleocapsid protein and the viral genome. May dysregulate normal immune and endothelial cell responses through an ITAM motif. Translocates to mitochondria, binds to host TUFM and recruits MAP1LC3B. These interactions induce mitochondrial autophagy and therefore destruction of host MAVS leading to inhibition of type I interferon (IFN) responses. Concomitant breakdown of glycoprotein N is apparently prevented by the nucleoprotein that may inhibit Gn-stimulated autophagosome-lysosome fusion. Interacts with the viral genomic RNA. In terms of biological role, forms homotetramers with glycoprotein N at the surface of the virion. Attaches the virion to host cell receptors including integrin ITGAV/ITGB3. This attachment induces virion internalization predominantly through clathrin-dependent endocytosis. Class II fusion protein that promotes fusion of viral membrane with host endosomal membrane after endocytosis of the virion. This is Envelopment polyprotein (GP) from Homo sapiens (Human).